A 146-amino-acid chain; its full sequence is Putative phosphotransferase enzyme IIA component YadI (146 aa).

The PTS EIIA type-4 domain occupies 1 to 124; sequence MLGWVITCHD…RIVELGAPEV (124 aa). The active-site Tele-phosphohistidine intermediate is the histidine 9.

Its subcellular location is the cytoplasm. In terms of biological role, the phosphoenolpyruvate-dependent sugar phosphotransferase system (sugar PTS), a major carbohydrate active -transport system, catalyzes the phosphorylation of incoming sugar substrates concomitantly with their translocation across the cell membrane. This Escherichia coli (strain K12) protein is Putative phosphotransferase enzyme IIA component YadI (yadI).